The chain runs to 233 residues: 5'-methylthioadenosine/S-adenosylhomocysteine nucleosidase (233 aa).

Glu-12 functions as the Proton acceptor in the catalytic mechanism. Substrate-binding positions include Gly-78, Ile-156, and 177-178 (ME). Asp-201 acts as the Proton donor in catalysis.

It belongs to the PNP/UDP phosphorylase family. MtnN subfamily.

It carries out the reaction S-adenosyl-L-homocysteine + H2O = S-(5-deoxy-D-ribos-5-yl)-L-homocysteine + adenine. The catalysed reaction is S-methyl-5'-thioadenosine + H2O = 5-(methylsulfanyl)-D-ribose + adenine. It catalyses the reaction 5'-deoxyadenosine + H2O = 5-deoxy-D-ribose + adenine. The protein operates within amino-acid biosynthesis; L-methionine biosynthesis via salvage pathway; S-methyl-5-thio-alpha-D-ribose 1-phosphate from S-methyl-5'-thioadenosine (hydrolase route): step 1/2. Its function is as follows. Catalyzes the irreversible cleavage of the glycosidic bond in both 5'-methylthioadenosine (MTA) and S-adenosylhomocysteine (SAH/AdoHcy) to adenine and the corresponding thioribose, 5'-methylthioribose and S-ribosylhomocysteine, respectively. Also cleaves 5'-deoxyadenosine, a toxic by-product of radical S-adenosylmethionine (SAM) enzymes, into 5-deoxyribose and adenine. The protein is 5'-methylthioadenosine/S-adenosylhomocysteine nucleosidase of Listeria innocua serovar 6a (strain ATCC BAA-680 / CLIP 11262).